A 307-amino-acid chain; its full sequence is GMP synthase [glutamine-hydrolyzing] subunit B (307 aa).

In terms of domain architecture, GMPS ATP-PPase spans 1-184 (MWENFIEEKV…LGLPEKIYNR (184 aa)). 27 to 33 (SGGVDSS) contributes to the ATP binding site.

In terms of assembly, heterodimer composed of a glutamine amidotransferase subunit (A) and a GMP-binding subunit (B).

It carries out the reaction XMP + L-glutamine + ATP + H2O = GMP + L-glutamate + AMP + diphosphate + 2 H(+). Its pathway is purine metabolism; GMP biosynthesis; GMP from XMP (L-Gln route): step 1/1. In terms of biological role, catalyzes the synthesis of GMP from XMP. The polypeptide is GMP synthase [glutamine-hydrolyzing] subunit B (Thermococcus kodakarensis (strain ATCC BAA-918 / JCM 12380 / KOD1) (Pyrococcus kodakaraensis (strain KOD1))).